The primary structure comprises 797 residues: Striatin-3 (797 aa).

Met1 is modified (N-acetylmethionine). Gly residues-rich tracts occupy residues 1–12 (MDELAGGGGGGP) and 33–43 (GGNGAAGGGGP). Residues 1 to 60 (MDELAGGGGGGPAMASPPRQQQGPGGNMSLSPGGNGAAGGGGPPATEGAGPAAGPELSRP) are disordered. Low complexity predominate over residues 44-55 (PATEGAGPAAGP). Residues 71 to 79 (YIQHEWARF) form a caveolin-binding region. Positions 77-136 (ARFEMERAHWEVERAELQARIAFLQGERKGQENLKKDLVRRIKMLEYALKQERAKYHKLK) form a coiled coil. A Phosphothreonine modification is found at Thr150. The calmodulin-binding stretch occupies residues 166–183 (QNSQLTWKQGRQLLRQYL). Phosphoserine is present on residues Ser202, Ser214, Ser229, Ser257, and Ser335. Positions 313–336 (DGEGAGEARSSGDGTEWDKDDLSP) are disordered. WD repeat units follow at residues 478–517 (SHFDGVRALAFHPVEPVLVTASEDHTLKLWNLQKTVPAKK), 531–570 (AHIGPVLSLAISSNGEQCFSGGTDATIQWWNMPSPNVDPY), 584–623 (AHTDAVWGLAYSGIKNQLLSCSADGTVRLWNPQEKLPCIC), 679–718 (QSSNHINRVVSHPTLPVTITAHEDRHIKFFDNKTGKMIHS), 721–760 (AHLDAVTSLAVDPNGIYLMSGSHDCSIRLWNLDSKTCVQE), and 767–796 (KLDESIYDVAFHPSKAYIASAGADALAKVF).

Belongs to the WD repeat striatin family. Tetramerizes. Part of the core of STRIPAK complexes composed of PP2A catalytic and scaffolding subunits, the striatins (PP2A regulatory subunits), the striatin-associated proteins MOB4, STRIP1 and STRIP2, PDCD10 and members of the STE20 kinases, such as STK24 and STK26. The STRIPAK complex can be extended by adapter proteins such as SLMAP:SIKE1 or CTTNBP2NL. Interacts with CDC42BPB.

It localises to the cytoplasm. The protein localises to the membrane. Its function is as follows. Calmodulin-binding scaffolding protein which is the center of the striatin-interacting phosphatase and kinase (STRIPAK) complexes. STRIPAK complexes have critical roles in protein (de)phosphorylation and are regulators of multiple signaling pathways including Hippo, MAPK, nuclear receptor and cytoskeleton remodeling. Different types of STRIPAK complexes are involved in a variety of biological processes such as cell growth, differentiation, apoptosis, metabolism and immune regulation. This chain is Striatin-3 (STRN3), found in Bos taurus (Bovine).